Consider the following 1174-residue polypeptide: Male determiner protein Mdmd(V) (1174 aa).

The segment covering 1-15 (MNATDAESRKPENKP) has biased composition (basic and acidic residues). Disordered stretches follow at residues 1–51 (MNAT…SGQR), 79–110 (RKDG…PVEL), and 136–259 (KQLS…LRRS). Positions 16–35 (SSESSSSGSTSGSSDGEVSS) are enriched in low complexity. The span at 36-47 (KTYFKNNKSKVL) shows a compositional bias: polar residues. The segment covering 79-92 (RKDGSNEMLPKEDS) has biased composition (basic and acidic residues). Polar residues predominate over residues 93–102 (INTNHNYTTD). Residues 138-153 (LSAYRSRSRSTRLSYS) are compositionally biased toward low complexity. Basic residues predominate over residues 167-180 (SRYKKSVLRSRRTS). A compositionally biased stretch (basic and acidic residues) spans 183–200 (HGRDSSTTKRSVSRDKDN). Positions 201–223 (RLRRRIGSSRSHTRSHSRFRRSE) are enriched in basic residues. Over residues 235 to 259 (RSQERRHERRRSMSSDYERIALRRS) the composition is skewed to basic and acidic residues. The 184-residue stretch at 348 to 531 (KKYIHGYINK…KVLFQVRRDG (184 aa)) folds into the MIF4G domain. Residues 597–608 (DSDGSFGSGSNS) show a composition bias toward low complexity. Residues 597–616 (DSDGSFGSGSNSETALSDCD) form a disordered region. The 117-residue stretch at 641 to 757 (ALRRTIYLTL…SWDVLDCIKL (117 aa)) folds into the MI domain. Positions 840–857 (SAPSSSSSSSLSSELSAP) are enriched in low complexity. Disordered stretches follow at residues 840-1045 (SAPS…SRTK) and 1095-1133 (RKDN…NHSR). Over residues 869 to 909 (KKKHKGKNKKMTKKKNPSKKKEKTKKIVGKNKIAAKNKTIK) the composition is skewed to basic residues. Residues 910-924 (RRTDKDNSSSKDNFL) show a composition bias toward basic and acidic residues. A compositionally biased stretch (low complexity) spans 926 to 957 (SESSSNESISLDSLSSELFAPSSYSSSESSND). Positions 963-1001 (KHKGKNKKMTKKKNPSNKREKTKKKLSKNKKAPNKNTKK) are enriched in basic residues. Positions 1010 to 1020 (SSESSISESKS) are enriched in low complexity. Basic residues predominate over residues 1034–1045 (RKKRVTSKSRTK). A compositionally biased stretch (basic and acidic residues) spans 1095–1118 (RKDNYGNRQNHEISQRHDSEIKRR). The span at 1119-1130 (REERKKRHHEKN) shows a compositional bias: basic residues.

The protein belongs to the CWC22 family. In terms of assembly, component of the spliceosome C complex.

Its subcellular location is the nucleus speckle. In terms of biological role, male determiner protein (M-factor) that controls male somatic sexual differentiation. Acts as a dominant factor that regulates the mRNA splicing of transformer (tra) and doublesex (dsx) transcripts and promotes expression of male splice forms of tra and dsx. Probably acts as a component of the spliceosome C complex required for mRNA splicing factor and exon-junction complex (EJC) assembly. Hinders eIF4AIII from non-specifically binding RNA and escorts it to the splicing machinery to promote EJC assembly on mature mRNAs. The polypeptide is Male determiner protein Mdmd(V) (Musca domestica (House fly)).